A 209-amino-acid chain; its full sequence is MGRGKIEIKRIENSTNRQVTFSKRRSGILKKAREISVLCDAEVGVVIFSSAGKLYDYCSPKTSLSRILEKYQTNSGKILWDEKHKSLSAEIDRIKKENDNMQIELRHLKGEDLNSLQPKELIMIEEALDNGIVNVNDKLMDHWERHVRTDKMLEDENKLLAFKLHQQDIALSGSMRDLELGYHPDRDFAAQMPITFRVQPSHPNLQENN.

Positions methionine 1–lysine 61 constitute an MADS-box domain. The 87-residue stretch at histidine 84–alanine 170 folds into the K-box domain.

Highly expressed in anthers and carpels. Expressed in pollen, tapetum and stigma.

It localises to the nucleus. Probable transcription factor involved in the development of floral organs. B-class protein required for normal development of lodicules (whorl 2). This Oryza sativa subsp. japonica (Rice) protein is MADS-box transcription factor 2 (MADS2).